The primary structure comprises 507 residues: Maturase K (507 aa).

Belongs to the intron maturase 2 family. MatK subfamily.

The protein localises to the plastid. It localises to the chloroplast. Usually encoded in the trnK tRNA gene intron. Probably assists in splicing its own and other chloroplast group II introns. The sequence is that of Maturase K from Persea americana (Avocado).